The following is a 194-amino-acid chain: Xanthine phosphoribosyltransferase (194 aa).

Residues leucine 20 and asparagine 27 each contribute to the xanthine site. Residue 128 to 132 (ANGEA) participates in 5-phospho-alpha-D-ribose 1-diphosphate binding. Lysine 156 is a xanthine binding site.

Belongs to the purine/pyrimidine phosphoribosyltransferase family. Xpt subfamily. Homodimer.

The protein localises to the cytoplasm. It catalyses the reaction XMP + diphosphate = xanthine + 5-phospho-alpha-D-ribose 1-diphosphate. The protein operates within purine metabolism; XMP biosynthesis via salvage pathway; XMP from xanthine: step 1/1. Its function is as follows. Converts the preformed base xanthine, a product of nucleic acid breakdown, to xanthosine 5'-monophosphate (XMP), so it can be reused for RNA or DNA synthesis. This chain is Xanthine phosphoribosyltransferase, found in Macrococcus caseolyticus (strain JCSC5402) (Macrococcoides caseolyticum).